The chain runs to 419 residues: Serine hydroxymethyltransferase 1 (419 aa).

(6S)-5,6,7,8-tetrahydrofolate is bound by residues leucine 121 and 125–127 (GHL). N6-(pyridoxal phosphate)lysine is present on lysine 230. (6S)-5,6,7,8-tetrahydrofolate is bound at residue 356–358 (SPF).

This sequence belongs to the SHMT family. Homodimer. It depends on pyridoxal 5'-phosphate as a cofactor.

The protein resides in the cytoplasm. The catalysed reaction is (6R)-5,10-methylene-5,6,7,8-tetrahydrofolate + glycine + H2O = (6S)-5,6,7,8-tetrahydrofolate + L-serine. Its pathway is one-carbon metabolism; tetrahydrofolate interconversion. The protein operates within amino-acid biosynthesis; glycine biosynthesis; glycine from L-serine: step 1/1. Functionally, catalyzes the reversible interconversion of serine and glycine with tetrahydrofolate (THF) serving as the one-carbon carrier. This reaction serves as the major source of one-carbon groups required for the biosynthesis of purines, thymidylate, methionine, and other important biomolecules. Also exhibits THF-independent aldolase activity toward beta-hydroxyamino acids, producing glycine and aldehydes, via a retro-aldol mechanism. The chain is Serine hydroxymethyltransferase 1 from Colwellia psychrerythraea (strain 34H / ATCC BAA-681) (Vibrio psychroerythus).